The following is a 326-amino-acid chain: Glycolipid sulfotransferase MRA_1383 (326 aa).

40-45 serves as a coordination point for 3'-phosphoadenylyl sulfate; sequence KSGLTW. The active-site Proton acceptor is His97. A 3'-phosphoadenylyl sulfate-binding site is contributed by 116-124; that stretch reads RDPRDAAVS.

It belongs to the sulfotransferase 1 family.

In terms of biological role, involved in the synthesis of cell wall sulfolipids. This is Glycolipid sulfotransferase MRA_1383 from Mycobacterium tuberculosis (strain ATCC 25177 / H37Ra).